A 704-amino-acid chain; its full sequence is Elongation factor G 2 (704 aa).

In terms of domain architecture, tr-type G spans 8–290; it reads ERYRNIGISA…AIIDYLPSPV (283 aa). Residues 17–24, 88–92, and 142–145 contribute to the GTP site; these read AHIDAGKT, DTPGH, and NKMD.

Belongs to the TRAFAC class translation factor GTPase superfamily. Classic translation factor GTPase family. EF-G/EF-2 subfamily.

The protein resides in the cytoplasm. Catalyzes the GTP-dependent ribosomal translocation step during translation elongation. During this step, the ribosome changes from the pre-translocational (PRE) to the post-translocational (POST) state as the newly formed A-site-bound peptidyl-tRNA and P-site-bound deacylated tRNA move to the P and E sites, respectively. Catalyzes the coordinated movement of the two tRNA molecules, the mRNA and conformational changes in the ribosome. The protein is Elongation factor G 2 of Polaromonas sp. (strain JS666 / ATCC BAA-500).